Reading from the N-terminus, the 500-residue chain is Probable cytosol aminopeptidase (500 aa).

2 residues coordinate Mn(2+): Lys268 and Asp273. The active site involves Lys280. The Mn(2+) site is built by Asp291, Asp350, and Glu352. The active site involves Arg354.

It belongs to the peptidase M17 family. It depends on Mn(2+) as a cofactor.

The protein resides in the cytoplasm. It catalyses the reaction Release of an N-terminal amino acid, Xaa-|-Yaa-, in which Xaa is preferably Leu, but may be other amino acids including Pro although not Arg or Lys, and Yaa may be Pro. Amino acid amides and methyl esters are also readily hydrolyzed, but rates on arylamides are exceedingly low.. The catalysed reaction is Release of an N-terminal amino acid, preferentially leucine, but not glutamic or aspartic acids.. Functionally, presumably involved in the processing and regular turnover of intracellular proteins. Catalyzes the removal of unsubstituted N-terminal amino acids from various peptides. The polypeptide is Probable cytosol aminopeptidase (Aromatoleum aromaticum (strain DSM 19018 / LMG 30748 / EbN1) (Azoarcus sp. (strain EbN1))).